Consider the following 119-residue polypeptide: Ribosome-binding factor A (119 aa).

It belongs to the RbfA family. In terms of assembly, monomer. Binds 30S ribosomal subunits, but not 50S ribosomal subunits or 70S ribosomes.

Its subcellular location is the cytoplasm. In terms of biological role, one of several proteins that assist in the late maturation steps of the functional core of the 30S ribosomal subunit. Associates with free 30S ribosomal subunits (but not with 30S subunits that are part of 70S ribosomes or polysomes). Required for efficient processing of 16S rRNA. May interact with the 5'-terminal helix region of 16S rRNA. In Chlorobium phaeovibrioides (strain DSM 265 / 1930) (Prosthecochloris vibrioformis (strain DSM 265)), this protein is Ribosome-binding factor A.